The primary structure comprises 196 residues: 3-isopropylmalate dehydratase small subunit (196 aa).

This sequence belongs to the LeuD family. LeuD type 1 subfamily. As to quaternary structure, heterodimer of LeuC and LeuD.

It catalyses the reaction (2R,3S)-3-isopropylmalate = (2S)-2-isopropylmalate. Its pathway is amino-acid biosynthesis; L-leucine biosynthesis; L-leucine from 3-methyl-2-oxobutanoate: step 2/4. Functionally, catalyzes the isomerization between 2-isopropylmalate and 3-isopropylmalate, via the formation of 2-isopropylmaleate. The chain is 3-isopropylmalate dehydratase small subunit from Streptococcus sanguinis (strain SK36).